Consider the following 282-residue polypeptide: Undecaprenyl-diphosphatase (282 aa).

Helical transmembrane passes span 45-65 (AFME…VVFI), 86-106 (WQLW…GIPL), 114-134 (FHNF…FILI), 151-171 (LPYK…FPGT), 196-216 (FFLG…KFIL), 224-244 (GQLT…MYVI), and 256-276 (FTVF…YWVF).

It belongs to the UppP family.

It localises to the cell membrane. It catalyses the reaction di-trans,octa-cis-undecaprenyl diphosphate + H2O = di-trans,octa-cis-undecaprenyl phosphate + phosphate + H(+). In terms of biological role, catalyzes the dephosphorylation of undecaprenyl diphosphate (UPP). Confers resistance to bacitracin. The polypeptide is Undecaprenyl-diphosphatase (Streptococcus gordonii (strain Challis / ATCC 35105 / BCRC 15272 / CH1 / DL1 / V288)).